The primary structure comprises 389 residues: Phosphopentomutase (389 aa).

6 residues coordinate Mn(2+): Asp10, Asp282, His287, Asp323, His324, and His335.

The protein belongs to the phosphopentomutase family. Mn(2+) is required as a cofactor.

Its subcellular location is the cytoplasm. The catalysed reaction is 2-deoxy-alpha-D-ribose 1-phosphate = 2-deoxy-D-ribose 5-phosphate. It carries out the reaction alpha-D-ribose 1-phosphate = D-ribose 5-phosphate. Its pathway is carbohydrate degradation; 2-deoxy-D-ribose 1-phosphate degradation; D-glyceraldehyde 3-phosphate and acetaldehyde from 2-deoxy-alpha-D-ribose 1-phosphate: step 1/2. Functionally, isomerase that catalyzes the conversion of deoxy-ribose 1-phosphate (dRib-1-P) and ribose 1-phosphate (Rib-1-P) to deoxy-ribose 5-phosphate (dRib-5-P) and ribose 5-phosphate (Rib-5-P), respectively. This chain is Phosphopentomutase, found in Clostridium kluyveri (strain NBRC 12016).